Consider the following 594-residue polypeptide: Proteasome-associated ATPase (594 aa).

Positions 20 to 98 form a coiled coil; sequence DDLAAQVTYL…KEEIDRLAQP (79 aa). Position 282–287 (282–287) interacts with ATP; sequence GCGKTL. Residues 593–594 are docks into pockets in the proteasome alpha-ring; it reads YL.

It belongs to the AAA ATPase family. As to quaternary structure, homohexamer. Assembles into a hexameric ring structure that caps the 20S proteasome core. Strongly interacts with the prokaryotic ubiquitin-like protein Pup through a hydrophobic interface; the interacting region of ARC lies in its N-terminal coiled-coil domain. There is one Pup binding site per ARC hexamer ring. Upon ATP-binding, the C-terminus of ARC interacts with the alpha-rings of the proteasome core, possibly by binding to the intersubunit pockets.

The protein operates within protein degradation; proteasomal Pup-dependent pathway. ATPase which is responsible for recognizing, binding, unfolding and translocation of pupylated proteins into the bacterial 20S proteasome core particle. May be essential for opening the gate of the 20S proteasome via an interaction with its C-terminus, thereby allowing substrate entry and access to the site of proteolysis. Thus, the C-termini of the proteasomal ATPase may function like a 'key in a lock' to induce gate opening and therefore regulate proteolysis. This Catenulispora acidiphila (strain DSM 44928 / JCM 14897 / NBRC 102108 / NRRL B-24433 / ID139908) protein is Proteasome-associated ATPase.